Here is a 1081-residue protein sequence, read N- to C-terminus: DNA polymerase delta catalytic subunit (1081 aa).

The tract at residues 1 to 22 (MTSKRPGGSSFQPEVKRKRESD) is disordered. Positions 981, 984, 998, and 1001 each coordinate Zn(2+). Residues 981 to 1001 (CLGCKSVLPRAESENAVCKHC) form a CysA-type zinc finger. [4Fe-4S] cluster contacts are provided by Cys1030, Cys1033, Cys1043, and Cys1048. A CysB motif motif is present at residues 1030–1048 (CQNCAKTMQDKVNCSARDC).

This sequence belongs to the DNA polymerase type-B family. Heterodimer with subunits of 125 kDa and 50 kDa. The 125 kDa subunit contains the polymerase active site and most likely the active site for the 3'-5' exonuclease activity. It depends on [4Fe-4S] cluster as a cofactor.

It localises to the nucleus. The catalysed reaction is DNA(n) + a 2'-deoxyribonucleoside 5'-triphosphate = DNA(n+1) + diphosphate. Possesses two enzymatic activities: DNA synthesis (polymerase) and an exonucleolytic activity that degrades single stranded DNA in the 3'- to 5'-direction. Required with its accessory proteins (proliferating cell nuclear antigen (PCNA) and replication factor C (RFC) or activator 1) for leading strand synthesis. Also involved in completing Okazaki fragments initiated by the DNA polymerase alpha/primase complex. This chain is DNA polymerase delta catalytic subunit, found in Caenorhabditis elegans.